Reading from the N-terminus, the 81-residue chain is Styelin-E (81 aa).

Residues 1–22 (MQMKATILIVLVALFMIQQSEA) form the signal peptide. Trp24 carries the 6'-bromotryptophan modification. Position 26 is a 3,4-dihydroxyarginine (Arg26). A 4,5-dihydroxylysine mark is found at Lys27, Lys30, and Lys34. A 3',4'-dihydroxyphenylalanine mark is found at Tyr36 and Tyr37. Lys38 is modified (4,5-dihydroxylysine). Lys40 bears the 5-hydroxylysine mark. A 3',4'-dihydroxyphenylalanine mark is found at Tyr41 and Tyr42. Lys44 is subject to 5-hydroxylysine. A Leucine amide modification is found at Leu54. The propeptide at 56 to 81 (DMTDEEFQDFMKEVEQAREEELQSRQ) is removed in mature form.

Contains L-DOPA (3',4'-dihydroxyphenylalanine). In terms of tissue distribution, hemocytes and pharyngeal tissues.

It is found in the secreted. Bactericidal against several Gram-positive and Gram-negative bacteria. This Styela clava (Sea squirt) protein is Styelin-E.